The chain runs to 40 residues: Large ribosomal subunit protein bL36 (40 aa).

Belongs to the bacterial ribosomal protein bL36 family.

This Corynebacterium kroppenstedtii (strain DSM 44385 / JCM 11950 / CIP 105744 / CCUG 35717) protein is Large ribosomal subunit protein bL36.